Reading from the N-terminus, the 365-residue chain is Probable L-tyrosine/L-aspartate decarboxylase (365 aa).

The residue at position 225 (Lys225) is an N6-(pyridoxal phosphate)lysine.

The protein belongs to the group II decarboxylase family. MfnA subfamily. Requires pyridoxal 5'-phosphate as cofactor.

It carries out the reaction L-tyrosine + H(+) = tyramine + CO2. The enzyme catalyses L-aspartate + H(+) = beta-alanine + CO2. It participates in cofactor biosynthesis; methanofuran biosynthesis. Its pathway is cofactor biosynthesis; coenzyme A biosynthesis. Functionally, catalyzes the decarboxylation of L-tyrosine to produce tyramine for methanofuran biosynthesis. Can also catalyze the decarboxylation of L-aspartate to produce beta-alanine for coenzyme A (CoA) biosynthesis. This chain is Probable L-tyrosine/L-aspartate decarboxylase, found in Methanocorpusculum labreanum (strain ATCC 43576 / DSM 4855 / Z).